A 333-amino-acid polypeptide reads, in one-letter code: Acyl-CoA wax alcohol acyltransferase 2 (333 aa).

The next 3 membrane-spanning stretches (helical) occupy residues 15–35 (VFALFQWALSALVIVTTVIIV), 38–58 (YLVVFTSYWPVTVLMLTWLAF), and 130–150 (TFPGITPYMLTLGAFFWVPFL).

It belongs to the diacylglycerol acyltransferase family. In terms of assembly, monomer. Expressed in Mueller cells of the retina (at protein level). Abundant in tissues rich in sebaceous glands such as the preputial gland and eyelid.

Its subcellular location is the endoplasmic reticulum membrane. It carries out the reaction a long chain fatty alcohol + a fatty acyl-CoA = a wax ester + CoA. It catalyses the reaction all-trans-retinol + an acyl-CoA = an all-trans-retinyl ester + CoA. The enzyme catalyses an acyl-CoA + a 1,2-diacyl-sn-glycerol = a triacyl-sn-glycerol + CoA. The catalysed reaction is 9-cis-retinol + a fatty acyl-CoA = 9-cis-retinyl ester + CoA. It carries out the reaction 11-cis-retinol + a fatty acyl-CoA = 11-cis-retinyl ester + CoA. It catalyses the reaction 13-cis-retinol + a fatty acyl-CoA = 13-cis-retinyl ester + CoA. The enzyme catalyses a 1-acylglycerol + an acyl-CoA = a 1,2-diacylglycerol + CoA. The catalysed reaction is 1-O-alkylglycerol + an acyl-CoA = 1-O-alkyl-3-acylglycerol + CoA. It carries out the reaction a 2-acylglycerol + an acyl-CoA = a 1,2-diacyl-sn-glycerol + CoA. It catalyses the reaction 2-(9Z-octadecenoyl)-glycerol + hexadecanoyl-CoA = 1-hexadecanoyl-2-(9Z-octadecenoyl)-sn-glycerol + CoA. The enzyme catalyses 1,2-di-(9Z-octadecenoyl)-sn-glycerol + hexadecanoyl-CoA = 1,2-di-(9Z)-octadecenoyl-3-hexadecanoyl-sn-glycerol + CoA. The catalysed reaction is hexadecan-1-ol + hexadecanoyl-CoA = hexadecanyl hexadecanoate + CoA. It carries out the reaction hexadecane-1,2-diol + hexadecanoyl-CoA = 2-hydroxyhexadecyl hexadecanoate + CoA. It catalyses the reaction all-trans-retinol + hexadecanoyl-CoA = all-trans-retinyl hexadecanoate + CoA. The enzyme catalyses 1,2-di-(9Z-octadecenoyl)-sn-glycerol + (9Z)-octadecenoyl-CoA = 1,2,3-tri-(9Z-octadecenoyl)-glycerol + CoA. The catalysed reaction is hexadecan-1-ol + (9Z)-octadecenoyl-CoA = hexadecanyl (9Z)-octadecenoate + CoA. It carries out the reaction (9Z)-hexadecen-1-ol + (9Z)-octadecenoyl-CoA = 1-O-(9Z)-hexadecenyl (9Z)-octadecenoate + CoA. It catalyses the reaction octadecan-1-ol + (9Z)-octadecenoyl-CoA = 1-O-octadecyl (9Z)-octadecenoate + CoA. The enzyme catalyses (9Z)-octadecen-1-ol + (9Z)-octadecenoyl-CoA = 1-O-(9Z)-octadecenyl (9Z)-octadecenoate + CoA. The catalysed reaction is hexadecan-1-ol + (9Z)-hexadecenoyl-CoA = 1-O-hexadecyl (9Z)-hexadecenoate + CoA. It carries out the reaction hexadecan-1-ol + octadecanoyl-CoA = hexadecanyl octadecanoate + CoA. It catalyses the reaction 11-cis-retinol + hexadecanoyl-CoA = 11-cis-retinyl hexadecanoate + CoA. The enzyme catalyses 1-O-(9Z-octadecenyl)-glycerol + (9Z)-octadecenoyl-CoA = 1-O-(9Z-octadecyl)-3-(9Z-octadecenoyl)-glycerol + CoA. The catalysed reaction is 1-(9Z-octadecenoyl)-glycerol + (9Z)-octadecenoyl-CoA = 1,2-di-(9Z-octadecenoyl)-glycerol + CoA. It carries out the reaction 11-cis-retinol + tetradecanoyl-CoA = 11-cis-retinyl tetradecanoate + CoA. It catalyses the reaction 9-cis-retinol + tetradecanoyl-CoA = 9-cis-retinyl tetradecanoate + CoA. The enzyme catalyses 9-cis-retinol + hexadecanoyl-CoA = 9-cis-retinyl hexadecanoate + CoA. The catalysed reaction is 13-cis-retinol + tetradecanoyl-CoA = 13-cis-retinyl tetradecanoate + CoA. It carries out the reaction all-trans-retinol + tetradecanoyl-CoA = all-trans-retinyl tetradecanoate + CoA. It catalyses the reaction tetradecan-1-ol + tetradecanoyl-CoA = tetradecanyl tetradecanoate + CoA. With respect to regulation, 11-cis retinoids act as allosteric modulators of acyl-CoA retinol O-fatty-acyltransferase (ARAT) activity by suppressing esterification of 9-cis, 13-cis, or all-trans retinols concurrently increasing the enzyme specificity toward 11-cis isomer. In terms of biological role, acyltransferase that catalyzes the formation of ester bonds between fatty alcohols and fatty acyl-CoAs to form wax monoesters. Shows a preference for medium chain acyl-CoAs from C12 to C16 in length and fatty alcohols shorter than C20, as the acyl donor and acceptor, respectively. Also possesses fatty acyl-CoA retinol acyltransferase (ARAT) activity that preferentially esterifies 11-cis-retinol, a chromophore precursor of bleached opsin pigments in cone cells. Shows higher catalytic efficiency toward 11-cis-retinol versus 9-cis-retinol, 13- cis-retinol and all-trans-retinol substrates. The protein is Acyl-CoA wax alcohol acyltransferase 2 (Awat2) of Mus musculus (Mouse).